Reading from the N-terminus, the 213-residue chain is Octanoyltransferase (213 aa).

The BPL/LPL catalytic domain occupies 32 to 207 (ENSHDEIWLV…NILALLNNPP (176 aa)). Substrate-binding positions include 71–78 (RGGQVTYH), 138–140 (SLG), and 151–153 (GLA). Cysteine 169 functions as the Acyl-thioester intermediate in the catalytic mechanism.

It belongs to the LipB family.

The protein resides in the cytoplasm. It carries out the reaction octanoyl-[ACP] + L-lysyl-[protein] = N(6)-octanoyl-L-lysyl-[protein] + holo-[ACP] + H(+). It functions in the pathway protein modification; protein lipoylation via endogenous pathway; protein N(6)-(lipoyl)lysine from octanoyl-[acyl-carrier-protein]: step 1/2. Its function is as follows. Catalyzes the transfer of endogenously produced octanoic acid from octanoyl-acyl-carrier-protein onto the lipoyl domains of lipoate-dependent enzymes. Lipoyl-ACP can also act as a substrate although octanoyl-ACP is likely to be the physiological substrate. The polypeptide is Octanoyltransferase (Salmonella paratyphi A (strain ATCC 9150 / SARB42)).